The following is a 214-amino-acid chain: Large ribosomal subunit protein eL14 (214 aa).

Lys-79 bears the N6-acetyllysine mark. Lys-85 is modified (N6-acetyllysine; alternate). Residue Lys-85 is modified to N6-succinyllysine; alternate. Lys-124 participates in a covalent cross-link: Glycyl lysine isopeptide (Lys-Gly) (interchain with G-Cter in SUMO2). Ser-139 bears the Phosphoserine mark. The segment at Pro-161 to Ala-214 is disordered. The stretch at Lys-170 to Ala-174 is one 1-1; approximate repeat. The 4 X 5 AA tandem repeats of Q-K-A-[APS]-X stretch occupies residues Lys-170–Pro-189. Residues Ala-172 to Ala-214 show a composition bias toward low complexity. Repeat copies occupy residues Gln-175–Ala-179, Gln-180–Gly-184, Gln-185–Pro-189, Lys-192–Gln-194, and Lys-195–Gln-197. Positions Lys-192–Gln-197 are 2 X 3 AA tandem repeats of K-G-Q. Lys-203 carries the N6-succinyllysine modification.

The protein belongs to the eukaryotic ribosomal protein eL14 family. As to quaternary structure, component of the large ribosomal subunit.

The protein localises to the cytoplasm. In terms of biological role, component of the large ribosomal subunit. The ribosome is a large ribonucleoprotein complex responsible for the synthesis of proteins in the cell. The chain is Large ribosomal subunit protein eL14 (RPL14) from Bos taurus (Bovine).